The primary structure comprises 115 residues: Con-Ins G1b (115 aa).

The first 24 residues, 1-24 (MTTSFYFLLMALGLLLYVCQSSFG), serve as a signal peptide directing secretion. Residues 25–29 (NQHTR) constitute a propeptide that is removed on maturation. Pro-34 is modified (4-hydroxyproline; partial). 3 cysteine pairs are disulfide-bonded: Cys-38-Cys-101, Cys-50-Cys-114, and Cys-100-Cys-105. Glu-41 is modified (4-carboxyglutamate). A propeptide spans 52 to 94 (RKRNDAGEKRGRASPLWQRRGFLSKLKARAKRNGAFHLPRDGR) (c peptide). The residue at position 98 (Glu-98) is a 4-carboxyglutamate. Pro-104 is modified (4-hydroxyproline; partial). Glu-109 is subject to 4-carboxyglutamate; partial. Cys-114 is subject to Cysteine amide.

The protein belongs to the insulin family. As to quaternary structure, heterodimer of A and B chains; disulfide-linked. As to expression, expressed by the venom gland.

The protein localises to the secreted. This venom insulin, from a fish-hunting cone snail, facilitates prey capture by rapidly inducing hypoglycemic shock. It is one of the smallest known insulin found in nature and lacks the C-terminal segment of the B chain that, in human insulin, mediates engagement of the insulin receptor (INSR) and assembly of the hormone's hexameric storage form. Despite lacking this segment, it both binds and activates human insulin receptor (long isoform (HIR-B) of INSR) with only a 10-fold lower potency. In vivo, intraperitoneal injection of this peptide into zebrafish lowers blood glucose with the same potency than human insulin. In addition, when applied to water, this peptide reduces overall locomotor activity of zebrafish larvae, observed as a significant decrease in the percentage of time spent swimming and movement frequency. The protein is Con-Ins G1b of Conus geographus (Geography cone).